The primary structure comprises 81 residues: Sulfur carrier protein TusA (81 aa).

The active-site Cysteine persulfide intermediate is Cys19.

Belongs to the sulfur carrier protein TusA family. Interacts with IscS.

Its subcellular location is the cytoplasm. Its pathway is tRNA modification. Its function is as follows. Sulfur carrier protein involved in sulfur trafficking in the cell. Part of a sulfur-relay system required for 2-thiolation during synthesis of 2-thiouridine of the modified wobble base 5-methylaminomethyl-2-thiouridine (mnm(5)s(2)U) in tRNA. Interacts with IscS and stimulates its cysteine desulfurase activity. Accepts an activated sulfur from IscS, which is then transferred to TusD, and thus determines the direction of sulfur flow from IscS to 2-thiouridine formation. Also appears to be involved in sulfur transfer for the biosynthesis of molybdopterin. The chain is Sulfur carrier protein TusA from Serratia proteamaculans (strain 568).